The chain runs to 309 residues: Porphobilinogen deaminase (309 aa).

S-(dipyrrolylmethanemethyl)cysteine is present on Cys-244.

It belongs to the HMBS family. In terms of assembly, monomer. Requires dipyrromethane as cofactor.

It catalyses the reaction 4 porphobilinogen + H2O = hydroxymethylbilane + 4 NH4(+). Its pathway is porphyrin-containing compound metabolism; protoporphyrin-IX biosynthesis; coproporphyrinogen-III from 5-aminolevulinate: step 2/4. Functionally, tetrapolymerization of the monopyrrole PBG into the hydroxymethylbilane pre-uroporphyrinogen in several discrete steps. The polypeptide is Porphobilinogen deaminase (Listeria monocytogenes serovar 1/2a (strain ATCC BAA-679 / EGD-e)).